We begin with the raw amino-acid sequence, 276 residues long: Protein canopy homolog 3 (276 aa).

A signal peptide spans Met1–Ala16. In terms of domain architecture, Saposin B-type spans Asn30–Leu269. Intrachain disulfides connect Cys32-Cys190, Cys35-Cys178, and Cys88-Cys150. The stretch at Asn137–Glu162 forms a coiled coil. Residues Ala206–Leu276 form a disordered region. Basic residues-rich tracts occupy residues Lys210–Gly219 and Lys228–Ser239. Over residues Lys240–Glu252 the composition is skewed to basic and acidic residues.

It belongs to the canopy family.

Its subcellular location is the endoplasmic reticulum. Functionally, toll-like receptor (TLR)-specific co-chaperone for HSP90B1. Required for proper TLR folding and hence controls TLR exit from the endoplasmic reticulum. Consequently, required for immune responses. This chain is Protein canopy homolog 3 (cnpy3), found in Danio rerio (Zebrafish).